The sequence spans 263 residues: Hydroxyethylthiazole kinase (263 aa).

Met-39 contributes to the substrate binding site. Residues Lys-115 and Thr-160 each coordinate ATP. Position 187 (Gly-187) interacts with substrate.

Belongs to the Thz kinase family. The cofactor is Mg(2+).

It carries out the reaction 5-(2-hydroxyethyl)-4-methylthiazole + ATP = 4-methyl-5-(2-phosphooxyethyl)-thiazole + ADP + H(+). Its pathway is cofactor biosynthesis; thiamine diphosphate biosynthesis; 4-methyl-5-(2-phosphoethyl)-thiazole from 5-(2-hydroxyethyl)-4-methylthiazole: step 1/1. Catalyzes the phosphorylation of the hydroxyl group of 4-methyl-5-beta-hydroxyethylthiazole (THZ). The polypeptide is Hydroxyethylthiazole kinase (Staphylococcus aureus (strain COL)).